A 381-amino-acid polypeptide reads, in one-letter code: Succinyl-diaminopimelate desuccinylase (381 aa).

His-71 serves as a coordination point for Zn(2+). Asp-73 is a catalytic residue. Asp-104 is a Zn(2+) binding site. Glu-136 (proton acceptor) is an active-site residue. The Zn(2+) site is built by Glu-137, Glu-166, and His-351.

This sequence belongs to the peptidase M20A family. DapE subfamily. As to quaternary structure, homodimer. Zn(2+) serves as cofactor. Co(2+) is required as a cofactor.

The enzyme catalyses N-succinyl-(2S,6S)-2,6-diaminopimelate + H2O = (2S,6S)-2,6-diaminopimelate + succinate. It functions in the pathway amino-acid biosynthesis; L-lysine biosynthesis via DAP pathway; LL-2,6-diaminopimelate from (S)-tetrahydrodipicolinate (succinylase route): step 3/3. Functionally, catalyzes the hydrolysis of N-succinyl-L,L-diaminopimelic acid (SDAP), forming succinate and LL-2,6-diaminopimelate (DAP), an intermediate involved in the bacterial biosynthesis of lysine and meso-diaminopimelic acid, an essential component of bacterial cell walls. This Ehrlichia chaffeensis (strain ATCC CRL-10679 / Arkansas) protein is Succinyl-diaminopimelate desuccinylase.